We begin with the raw amino-acid sequence, 444 residues long: Pre-mRNA-splicing factor cwc25 (444 aa).

3 disordered regions span residues 1-27 (MGSG…QKAE), 168-385 (LASM…TDLD), and 397-425 (EAER…GFMS). Residues 19 to 65 (NVAATQKAEAEAIAERKKLQQRLQEIEEERRKEEIQKALEAAGGKRK) are a coiled coil. A compositionally biased stretch (basic residues) spans 186 to 199 (QRRHKHRSHHHRSD). Composition is skewed to basic and acidic residues over residues 200–220 (RHRD…DRDR) and 228–281 (DSRD…DDRS). Basic residues predominate over residues 282-293 (RRHRFPQGRSRS). Composition is skewed to basic and acidic residues over residues 305 to 344 (RREY…EQPK), 360 to 372 (DGDH…ERAK), and 397 to 410 (EAER…EKAR). A coiled-coil region spans residues 364–417 (KNAEEERAKKLAAMQAAATDLDKAREERLKALAEAERAEREADEKARQQNKKFR).

The protein belongs to the CWC25 family. In terms of assembly, associated with the spliceosome.

The protein resides in the nucleus. Functionally, involved in pre-mRNA splicing. The polypeptide is Pre-mRNA-splicing factor cwc25 (msp-6) (Neurospora crassa (strain ATCC 24698 / 74-OR23-1A / CBS 708.71 / DSM 1257 / FGSC 987)).